The primary structure comprises 982 residues: Probable beta-galactosidase C (982 aa).

An N-terminal signal peptide occupies residues 1-21 (MRLFALLPVLLGLISSHFVSA). Residues tyrosine 80, asparagine 125, alanine 126, glutamate 127, and asparagine 185 each contribute to the substrate site. The Proton donor role is filled by glutamate 186. Residue tyrosine 249 coordinates substrate. Cysteine 255 and cysteine 302 are disulfide-bonded. Asparagine 274 carries N-linked (GlcNAc...) asparagine glycosylation. Glutamate 285 acts as the Nucleophile in catalysis. Tyrosine 351 provides a ligand contact to substrate. N-linked (GlcNAc...) asparagine glycans are attached at residues asparagine 389, asparagine 434, asparagine 600, asparagine 675, asparagine 718, and asparagine 785.

Belongs to the glycosyl hydrolase 35 family.

The protein localises to the secreted. The catalysed reaction is Hydrolysis of terminal non-reducing beta-D-galactose residues in beta-D-galactosides.. Functionally, cleaves beta-linked terminal galactosyl residues from gangliosides, glycoproteins, and glycosaminoglycans. This Penicillium rubens (strain ATCC 28089 / DSM 1075 / NRRL 1951 / Wisconsin 54-1255) (Penicillium chrysogenum) protein is Probable beta-galactosidase C (lacC).